The primary structure comprises 139 residues: Large ribosomal subunit protein bL17 (139 aa).

The segment at 120 to 139 (EDAKGRDSGPTQDNSEAEAA) is disordered.

As to quaternary structure, part of the 50S ribosomal subunit. Contacts protein L32. May be methylated thrice, on undetermined residues.

This Rhodopseudomonas palustris (strain ATCC BAA-98 / CGA009) protein is Large ribosomal subunit protein bL17.